Consider the following 86-residue polypeptide: Neurotoxin LmNaTx17 (86 aa).

The signal sequence occupies residues 1–18 (MKILFVIVLAAFFIGVHC). Residues 19 to 85 (KHGYPVQYSG…TWDYKTGKCR (67 aa)) enclose the LCN-type CS-alpha/beta domain. 4 cysteine pairs are disulfide-bonded: Cys33–Cys84, Cys37–Cys58, Cys44–Cys65, and Cys48–Cys67.

The protein belongs to the long (4 C-C) scorpion toxin superfamily. Sodium channel inhibitor family. Beta subfamily. Expressed by the venom gland.

Its subcellular location is the secreted. In terms of biological role, binds voltage-independently at site-4 of sodium channels (Nav) and shift the voltage of activation toward more negative potentials thereby affecting sodium channel activation and promoting spontaneous and repetitive firing. The polypeptide is Neurotoxin LmNaTx17 (Lychas mucronatus (Chinese swimming scorpion)).